Consider the following 233-residue polypeptide: Small ribosomal subunit protein uS3 (233 aa).

Residues 39 to 107 enclose the KH type-2 domain; that stretch reads IRAFLKRKLY…DVNINIKEER (69 aa). Positions 212–222 are enriched in basic and acidic residues; that stretch reads MQPEKTEESAP. Residues 212 to 233 are disordered; the sequence is MQPEKTEESAPAKKPRRTRRGK. Positions 224 to 233 are enriched in basic residues; that stretch reads KKPRRTRRGK.

The protein belongs to the universal ribosomal protein uS3 family. In terms of assembly, part of the 30S ribosomal subunit. Forms a tight complex with proteins S10 and S14.

Binds the lower part of the 30S subunit head. Binds mRNA in the 70S ribosome, positioning it for translation. This chain is Small ribosomal subunit protein uS3, found in Campylobacter jejuni subsp. jejuni serotype O:6 (strain 81116 / NCTC 11828).